Here is a 212-residue protein sequence, read N- to C-terminus: Probable 2-dehydro-3-deoxy-6-phosphogalactonate aldolase (212 aa).

Arginine 18 contacts 2-dehydro-3-deoxy-6-phospho-D-galactonate. Catalysis depends on glutamate 41, which acts as the Proton donor/acceptor. 2-dehydro-3-deoxy-6-phospho-D-galactonate contacts are provided by threonine 70, lysine 130, glycine 160, glycine 180, and serine 181. Lysine 130 (schiff-base intermediate with substrate) is an active-site residue.

This sequence belongs to the KHG/KDPG aldolase family. In terms of assembly, homotrimer.

The catalysed reaction is 2-dehydro-3-deoxy-6-phospho-D-galactonate = D-glyceraldehyde 3-phosphate + pyruvate. The protein operates within carbohydrate acid metabolism; D-galactonate degradation; D-glyceraldehyde 3-phosphate and pyruvate from D-galactonate: step 3/3. Involved in the degradation of galactose via the DeLey-Doudoroff pathway. Catalyzes the reversible, stereospecific retro-aldol cleavage of 2-keto-3-deoxy-6-phosphogalactonate (KDPGal) to pyruvate and D-glyceraldehyde-3-phosphate. This is Probable 2-dehydro-3-deoxy-6-phosphogalactonate aldolase (dgoA) from Rhizobium meliloti (strain 1021) (Ensifer meliloti).